A 359-amino-acid polypeptide reads, in one-letter code: WAT1-related protein At4g16620 (359 aa).

Helical transmembrane passes span 5-25 (ETLI…IYAG), 41-61 (LLIV…LAFL), 77-97 (IKLV…FLEG), 105-125 (MATA…WAAG), 143-163 (TVLC…TATL), 183-203 (ILGC…IVLQ), 206-226 (ILAE…MGGI), 246-266 (VIGL…SGGG), 279-299 (PVIV…VSAF), and 305-325 (FNLG…FVLW). An EamA 1 domain is found at 30–154 (LSQLLSLGID…LCVMGALIMS (125 aa)). The 119-residue stretch at 206–324 (ILAEFPAPIS…LMFGGLYFVL (119 aa)) folds into the EamA 2 domain.

Belongs to the drug/metabolite transporter (DMT) superfamily. Plant drug/metabolite exporter (P-DME) (TC 2.A.7.4) family.

It is found in the membrane. The polypeptide is WAT1-related protein At4g16620 (Arabidopsis thaliana (Mouse-ear cress)).